Consider the following 486-residue polypeptide: Ribosomal RNA small subunit methyltransferase F (486 aa).

Residues 122–128, glutamate 146, aspartate 173, and aspartate 191 each bind S-adenosyl-L-methionine; that span reads ASAPGSK. The active-site Nucleophile is cysteine 244.

Belongs to the class I-like SAM-binding methyltransferase superfamily. RsmB/NOP family.

Its subcellular location is the cytoplasm. It catalyses the reaction cytidine(1407) in 16S rRNA + S-adenosyl-L-methionine = 5-methylcytidine(1407) in 16S rRNA + S-adenosyl-L-homocysteine + H(+). Functionally, specifically methylates the cytosine at position 1407 (m5C1407) of 16S rRNA. This chain is Ribosomal RNA small subunit methyltransferase F, found in Shewanella loihica (strain ATCC BAA-1088 / PV-4).